A 565-amino-acid polypeptide reads, in one-letter code: MFKKEPHIKALSNLKNSERKKLLQTFQKQTNNEEYSFRTSTIKQTNFNGQKSVGTVYTDENNTPILFKEKHKEQLFPTVYSCWEYPALLPIVLTHGFVIEEHLFNGANLMISGSIPPFDPRCKIGTLCGIASKQAPETVLAIGIVELDLPSFDKVIGETGVAVKIIHHFNDGLSKVFKMKLEPPFVLSTQSKDNNISSKQIESSEQIKAVEKEQEDVKEASVDVEEIAEVLDHFTVSDVDYFITRALYYTLTQDKGLELPISASNFISNHIMRNLPPIDHNEVNVKKTSWKKSAKFLKHFEKEGFLKLKGKGDDLTIVGKNTDKDELKNFVPYKLGCSKSATESRESTTSKEKTSGMMYSLTLYKPFNLAKDLLKEVNLASHTYYTSQDIRSAVSQYISVKNLADTKDKGKVIMDDLLFDMVNKKKKVLNASRIIARGEILHPLLTNNFTEFYQIFKSDDTLLFKAPMKGSLPHIKIITEMKIGRKVITRVSNFEVFQVDPESLAADLRKICSGSTTISESQTFKCAEVQVQGPHGQSIIDHLNKLGIPSKWIDFENKLKKKKRK.

The PUA domain maps to 89–170 (LPIVLTHGFV…VAVKIIHHFN (82 aa)). Residues 362–447 (TLYKPFNLAK…GEILHPLLTN (86 aa)) form the SWIB/MDM2 domain. Residues 475 to 547 (IKIITEMKIG…SIIDHLNKLG (73 aa)) enclose the SUI1 domain.

Belongs to the eIF2D family. Interacts with the 40S ribosomal subunit.

The protein is Translation machinery-associated protein 64 (TMA64) of Saccharomyces cerevisiae (strain ATCC 204508 / S288c) (Baker's yeast).